The primary structure comprises 144 residues: Large ribosomal subunit protein uL15 (144 aa).

The disordered stretch occupies residues 1–57 (MQLNDLRSAPGARREKHRPGRGIGSGLGKTGGRGHKGLTSRSGGKVAPGFEGGQQPL). Over residues 21-31 (RGIGSGLGKTG) the composition is skewed to gly residues.

This sequence belongs to the universal ribosomal protein uL15 family. As to quaternary structure, part of the 50S ribosomal subunit.

In terms of biological role, binds to the 23S rRNA. The polypeptide is Large ribosomal subunit protein uL15 (Pseudomonas aeruginosa (strain LESB58)).